The chain runs to 261 residues: Cytochrome c oxidase subunit 3 (261 aa).

At Met-1 to Pro-15 the chain is on the mitochondrial matrix side. The chain crosses the membrane as a helical span at residues Trp-16–Trp-34. The Mitochondrial intermembrane portion of the chain corresponds to Phe-35 to Thr-40. A helical transmembrane segment spans residues Ile-41–Thr-66. The Mitochondrial matrix portion of the chain corresponds to Phe-67–Thr-72. Residues Pro-73 to Ser-105 form a helical membrane-spanning segment. At Leu-106–Glu-128 the chain is on the mitochondrial intermembrane side. The helical transmembrane segment at Val-129–Met-152 threads the bilayer. Residues Glu-153–Asn-155 are Mitochondrial matrix-facing. The helical transmembrane segment at Arg-156–Glu-183 threads the bilayer. Residues Ala-184 to Asp-190 are Mitochondrial intermembrane-facing. A helical transmembrane segment spans residues Gly-191–Leu-223. At Lys-224–His-232 the chain is on the mitochondrial matrix side. A helical membrane pass occupies residues Phe-233–Ile-256. Residues Tyr-257–Ser-261 lie on the Mitochondrial intermembrane side of the membrane.

Belongs to the cytochrome c oxidase subunit 3 family. As to quaternary structure, component of the cytochrome c oxidase (complex IV, CIV), a multisubunit enzyme composed of 14 subunits. The complex is composed of a catalytic core of 3 subunits MT-CO1, MT-CO2 and MT-CO3, encoded in the mitochondrial DNA, and 11 supernumerary subunits COX4I, COX5A, COX5B, COX6A, COX6B, COX6C, COX7A, COX7B, COX7C, COX8 and NDUFA4, which are encoded in the nuclear genome. The complex exists as a monomer or a dimer and forms supercomplexes (SCs) in the inner mitochondrial membrane with NADH-ubiquinone oxidoreductase (complex I, CI) and ubiquinol-cytochrome c oxidoreductase (cytochrome b-c1 complex, complex III, CIII), resulting in different assemblies (supercomplex SCI(1)III(2)IV(1) and megacomplex MCI(2)III(2)IV(2)).

The protein localises to the mitochondrion inner membrane. The catalysed reaction is 4 Fe(II)-[cytochrome c] + O2 + 8 H(+)(in) = 4 Fe(III)-[cytochrome c] + 2 H2O + 4 H(+)(out). Its function is as follows. Component of the cytochrome c oxidase, the last enzyme in the mitochondrial electron transport chain which drives oxidative phosphorylation. The respiratory chain contains 3 multisubunit complexes succinate dehydrogenase (complex II, CII), ubiquinol-cytochrome c oxidoreductase (cytochrome b-c1 complex, complex III, CIII) and cytochrome c oxidase (complex IV, CIV), that cooperate to transfer electrons derived from NADH and succinate to molecular oxygen, creating an electrochemical gradient over the inner membrane that drives transmembrane transport and the ATP synthase. Cytochrome c oxidase is the component of the respiratory chain that catalyzes the reduction of oxygen to water. Electrons originating from reduced cytochrome c in the intermembrane space (IMS) are transferred via the dinuclear copper A center (CU(A)) of subunit 2 and heme A of subunit 1 to the active site in subunit 1, a binuclear center (BNC) formed by heme A3 and copper B (CU(B)). The BNC reduces molecular oxygen to 2 water molecules using 4 electrons from cytochrome c in the IMS and 4 protons from the mitochondrial matrix. This chain is Cytochrome c oxidase subunit 3 (MT-CO3), found in Eudorcas rufifrons (Red-fronted gazelle).